The chain runs to 178 residues: NAD(P)H-quinone oxidoreductase subunit J (178 aa).

This sequence belongs to the complex I 30 kDa subunit family. NDH-1 can be composed of about 15 different subunits; different subcomplexes with different compositions have been identified which probably have different functions.

It localises to the cellular thylakoid membrane. The enzyme catalyses a plastoquinone + NADH + (n+1) H(+)(in) = a plastoquinol + NAD(+) + n H(+)(out). It carries out the reaction a plastoquinone + NADPH + (n+1) H(+)(in) = a plastoquinol + NADP(+) + n H(+)(out). Its function is as follows. NDH-1 shuttles electrons from an unknown electron donor, via FMN and iron-sulfur (Fe-S) centers, to quinones in the respiratory and/or the photosynthetic chain. The immediate electron acceptor for the enzyme in this species is believed to be plastoquinone. Couples the redox reaction to proton translocation, and thus conserves the redox energy in a proton gradient. Cyanobacterial NDH-1 also plays a role in inorganic carbon-concentration. The chain is NAD(P)H-quinone oxidoreductase subunit J from Crocosphaera subtropica (strain ATCC 51142 / BH68) (Cyanothece sp. (strain ATCC 51142)).